Consider the following 169-residue polypeptide: Heat shock protein beta-7 (169 aa).

Residues 1–37 (MSHRTSSAFRAERSFRSSSSSSSSSSSSASRALPAQD) are disordered. The segment at 1 to 70 (MSHRTSSAFR…PLAFPARPGG (70 aa)) is required for localization to SC35 splicing speckles. Over residues 16 to 32 (RSSSSSSSSSSSSASRA) the composition is skewed to low complexity. Positions 61–169 (PLAFPARPGG…QQTFRTEIKI (109 aa)) constitute a sHSP domain.

Belongs to the small heat shock protein (HSP20) family. As to quaternary structure, interacts with C-terminal domain of actin-binding protein 280. Found in both cardiac and slow skeletal (soleus) muscle.

It is found in the cytoplasm. The protein localises to the nucleus. Its subcellular location is the cajal body. This chain is Heat shock protein beta-7 (Hspb7), found in Mus musculus (Mouse).